The following is a 330-amino-acid chain: MASSTPKTLMDFFQPAKRLKASPSSSSFPAVSVAGGSRDLGSVANSPPRVTVTTSVADDSSGLTPEQIARAEFNKFVAKSKRNLAVCSERVTKAKSEGNCYVPLSELLVEESWLKALPGEFHKPYAKSLSDFLEREIITDSKSPLIYPPQHLIFNALNTTPFDRVKTVIIGQDPYHGPGQAMGLSFSVPEGEKLPSSLLNIFKELHKDVGCSIPRHGNLQKWAVQGVLLLNAVLTVRSKQPNSHAKKGWEQFTDAVIQSISQQKEGVVFLLWGRYAQEKSKLIDATKHHILTAAHPSGLSANRGFFDCRHFSRANQLLEEMGIPPIDWQL.

A mitochondrion-targeting transit peptide spans 1–49 (MASSTPKTLMDFFQPAKRLKASPSSSSFPAVSVAGGSRDLGSVANSPPR). The active-site Proton acceptor is aspartate 173.

The protein belongs to the uracil-DNA glycosylase (UDG) superfamily. UNG family.

It localises to the mitochondrion. It carries out the reaction Hydrolyzes single-stranded DNA or mismatched double-stranded DNA and polynucleotides, releasing free uracil.. Inhidited by the small peptide uracil-DNA-glycosylase inhibitor (Ugi). Its function is as follows. Excises uracil residues from the DNA which can arise as a result of misincorporation of dUMP residues by DNA polymerase or due to deamination of cytosine. More active on U:G, U:T and U:C mispairs than on U:A pairs. Highly specific for uracil and no activity with 5-substituted uracil or cytosine derivatives. Required for initiation of base excision repair (BER) of uracil. This chain is Uracil-DNA glycosylase, mitochondrial, found in Arabidopsis thaliana (Mouse-ear cress).